Here is a 529-residue protein sequence, read N- to C-terminus: Kunitz-type protease inhibitor 1 (529 aa).

The N-terminal stretch at 1–35 (MAPARTMARARLAPAGIPAVALWLLCTLGLQGTQA) is a signal peptide. An MANSC domain is found at 57–140 (GVPGFVLDTN…FAPREGFINY (84 aa)). N-linked (GlcNAc...) asparagine glycosylation is found at Asn-66 and Asn-235. The BPTI/Kunitz inhibitor 1 domain occupies 250–300 (CLASNKVGRCRGSFPRWYYDPTEQICKSFVYGGCLGNKNNYLREEECILAC). Cystine bridges form between Cys-250-Cys-300, Cys-259-Cys-283, Cys-275-Cys-296, Cys-335-Cys-347, Cys-342-Cys-360, Cys-354-Cys-369, Cys-391-Cys-441, Cys-400-Cys-424, and Cys-416-Cys-437. In terms of domain architecture, LDL-receptor class A spans 334-370 (TCQPTQFRCSNGCCIDSFLECDDTPNCPDASDEAACE). The region spanning 391-441 (CVDLPDTGLCKESIPRWYYNPFSEHCARFTYGGCYGNKNNFEEEQQCLESC) is the BPTI/Kunitz inhibitor 2 domain. N-linked (GlcNAc...) asparagine glycosylation is present at Asn-523.

In terms of assembly, interacts with HGFAC. Interacts with TMPRSS13; the interaction promotes the phosphorylation and cell membrane localization of TMPRSS13.

It localises to the secreted. The protein localises to the cytoplasm. Its subcellular location is the cell membrane. In terms of biological role, inhibitor of HGFAC. Inhibits serine protease activity of ST14/matriptase in vitro. Inhibits serine protease activity of TMPRSS13, via the BPTI/Kunitz inhibitor 1 domain. This chain is Kunitz-type protease inhibitor 1 (SPINT1), found in Homo sapiens (Human).